The following is a 1225-amino-acid chain: DNA-directed RNA polymerase subunit beta' (1225 aa).

Zn(2+) contacts are provided by C60, C62, C75, and C78. Residues D450, D452, and D454 each coordinate Mg(2+). Zn(2+)-binding residues include C818, C892, C899, and C902.

Belongs to the RNA polymerase beta' chain family. As to quaternary structure, the RNAP catalytic core consists of 2 alpha, 1 beta, 1 beta' and 1 omega subunit. When a sigma factor is associated with the core the holoenzyme is formed, which can initiate transcription. Requires Mg(2+) as cofactor. Zn(2+) is required as a cofactor.

It catalyses the reaction RNA(n) + a ribonucleoside 5'-triphosphate = RNA(n+1) + diphosphate. In terms of biological role, DNA-dependent RNA polymerase catalyzes the transcription of DNA into RNA using the four ribonucleoside triphosphates as substrates. This chain is DNA-directed RNA polymerase subunit beta', found in Streptococcus pneumoniae (strain ATCC 700669 / Spain 23F-1).